Here is a 239-residue protein sequence, read N- to C-terminus: MKFIYLFKKESTLQNCINELKLKNPGKEIKIHCYFDFRVNGEDKKTTFCLLKLESNIEIPYETFEILNRKQFEKKFNGLENKLEIKNIPSTSSSPSSSQLFLTLPATSQSSQPKSTNSSTESSSIGQFKNQVDENEINLNKNKIDEFQKDVISLQQKVSSLFQQYNKENEKNKTLNQIFDIQNKIQKMQQQIHFIQNNQESFITLFINYKVKIGSAFIIYIFYNVLFFIIVRFNSFFFF.

Residues leucine 104–glutamine 127 are disordered. Low complexity predominate over residues threonine 107 to glutamine 127. Residues glutamate 134–phenylalanine 202 are a coiled coil. Residues valine 211 to valine 231 traverse the membrane as a helical segment.

The protein localises to the membrane. This is an uncharacterized protein from Dictyostelium discoideum (Social amoeba).